We begin with the raw amino-acid sequence, 90 residues long: Large ribosomal subunit protein bL27 (90 aa).

The tract at residues 1 to 21 (MASKKAGGSTRNGRDSEAKRL) is disordered.

This sequence belongs to the bacterial ribosomal protein bL27 family.

The polypeptide is Large ribosomal subunit protein bL27 (Neisseria meningitidis serogroup C (strain 053442)).